Consider the following 300-residue polypeptide: NAD kinase (300 aa).

Asp75 (proton acceptor) is an active-site residue. NAD(+)-binding positions include 75–76, 149–150, Arg177, Asp179, 190–195, Ala214, and Gln248; these read DG, ND, and TAYALS.

Belongs to the NAD kinase family. A divalent metal cation serves as cofactor.

The protein resides in the cytoplasm. The enzyme catalyses NAD(+) + ATP = ADP + NADP(+) + H(+). Involved in the regulation of the intracellular balance of NAD and NADP, and is a key enzyme in the biosynthesis of NADP. Catalyzes specifically the phosphorylation on 2'-hydroxyl of the adenosine moiety of NAD to yield NADP. This Burkholderia mallei (strain SAVP1) protein is NAD kinase.